The chain runs to 235 residues: Triosephosphate isomerase (235 aa).

A substrate-binding site is contributed by 7-9 (NFK). His-92 (electrophile) is an active-site residue. Glu-161 acts as the Proton acceptor in catalysis. Residues Gly-167 and Ser-197 each contribute to the substrate site.

It belongs to the triosephosphate isomerase family. As to quaternary structure, homodimer.

It is found in the cytoplasm. It catalyses the reaction D-glyceraldehyde 3-phosphate = dihydroxyacetone phosphate. It functions in the pathway carbohydrate biosynthesis; gluconeogenesis. It participates in carbohydrate degradation; glycolysis; D-glyceraldehyde 3-phosphate from glycerone phosphate: step 1/1. Its function is as follows. Involved in the gluconeogenesis. Catalyzes stereospecifically the conversion of dihydroxyacetone phosphate (DHAP) to D-glyceraldehyde-3-phosphate (G3P). This chain is Triosephosphate isomerase, found in Helicobacter hepaticus (strain ATCC 51449 / 3B1).